Here is a 542-residue protein sequence, read N- to C-terminus: Prolyl 4-hydroxylase subunit alpha-3 (542 aa).

A signal peptide spans 1 to 24 (MGPGARLALLALLALGGDPAAATG). A coiled-coil region spans residues 105–129 (LEATENIRALKDGYEKVEQDLPAFE). One copy of the TPR repeat lies at 225 to 258 (EDALDYLAFACFQVGNVSCALSLSREFLVYSPDN). Asn240 carries N-linked (GlcNAc...) asparagine glycosylation. The region spanning 420–527 (YAEYLQVVNY…KWVANKWIHE (108 aa)) is the Fe2OG dioxygenase domain. Fe cation is bound by residues His438 and Asp440. Residue Asn480 is glycosylated (N-linked (GlcNAc...) asparagine). His508 provides a ligand contact to Fe cation. Residue Lys518 coordinates 2-oxoglutarate.

This sequence belongs to the P4HA family. As to quaternary structure, heterotetramer of two alpha-3 chains and two beta chains (the beta chain is the multi-functional PDI). Fe(2+) is required as a cofactor. Requires L-ascorbate as cofactor. Post-translationally, N-glycosylation plays no role in the catalytic activity.

It is found in the endoplasmic reticulum lumen. The catalysed reaction is L-prolyl-[collagen] + 2-oxoglutarate + O2 = trans-4-hydroxy-L-prolyl-[collagen] + succinate + CO2. Its function is as follows. Catalyzes the post-translational formation of 4-hydroxyproline in -Xaa-Pro-Gly- sequences in collagens and other proteins. This Mus musculus (Mouse) protein is Prolyl 4-hydroxylase subunit alpha-3 (P4ha3).